Here is a 159-residue protein sequence, read N- to C-terminus: Peptide deformylase (159 aa).

2 residues coordinate Fe cation: cysteine 88 and histidine 130. Glutamate 131 is a catalytic residue. Residue histidine 134 coordinates Fe cation.

The protein belongs to the polypeptide deformylase family. The cofactor is Fe(2+).

The catalysed reaction is N-terminal N-formyl-L-methionyl-[peptide] + H2O = N-terminal L-methionyl-[peptide] + formate. Its function is as follows. Removes the formyl group from the N-terminal Met of newly synthesized proteins. Requires at least a dipeptide for an efficient rate of reaction. N-terminal L-methionine is a prerequisite for activity but the enzyme has broad specificity at other positions. This Caldanaerobacter subterraneus subsp. tengcongensis (strain DSM 15242 / JCM 11007 / NBRC 100824 / MB4) (Thermoanaerobacter tengcongensis) protein is Peptide deformylase.